The primary structure comprises 138 residues: Large-conductance mechanosensitive channel (138 aa).

The next 3 helical transmembrane spans lie at 15 to 35 (VDLA…NSIV), 38 to 58 (IIMP…MFIQ), and 80 to 100 (GNFI…FLVV).

The protein belongs to the MscL family. Homopentamer.

Its subcellular location is the cell inner membrane. Channel that opens in response to stretch forces in the membrane lipid bilayer. May participate in the regulation of osmotic pressure changes within the cell. This chain is Large-conductance mechanosensitive channel, found in Brucella canis (strain ATCC 23365 / NCTC 10854 / RM-666).